We begin with the raw amino-acid sequence, 155 residues long: V-type proton ATPase 16 kDa proteolipid subunit c (155 aa).

Topologically, residues 1–10 (MSEAKNGPEY) are lumenal. The chain crosses the membrane as a helical span at residues 11–33 (ASFFAVMGASAAMVFSALGAAYG). Residues 34 to 55 (TAKSGTGIAAMSVMRPEMIMKS) are Cytoplasmic-facing. Residues 56-76 (IIPVVMAGIIAIYGLVVAVLI) traverse the membrane as a helical segment. At 77-92 (ANSLNDGISLYRSFLQ) the chain is on the lumenal side. The helical transmembrane segment at 93–114 (LGAGLSVGLSGLAAGFAIGIVG) threads the bilayer. Over 115–131 (DAGVRGTAQQPRLFVGM) the chain is Cytoplasmic. Residues 132–152 (ILILIFAEVLGLYGLIVALIL) form a helical membrane-spanning segment. The Lumenal segment spans residues 153–155 (STK).

It belongs to the V-ATPase proteolipid subunit family. As to quaternary structure, V-ATPase is a heteromultimeric enzyme made up of two complexes: the ATP-hydrolytic V1 complex and the proton translocation V0 complex. The V1 complex consists of three catalytic AB heterodimers that form a heterohexamer, three peripheral stalks each consisting of EG heterodimers, one central rotor including subunits D and F, and the regulatory subunits C and H. The proton translocation complex V0 consists of the proton transport subunit a, a ring of proteolipid subunits c9c'', rotary subunit d, subunits e and f, and the accessory subunits ATP6AP1/Ac45 and ATP6AP2/PRR. Interacts with the V0 complex V-ATPase subunit a4 ATP6V0A4. Interacts with LASS2. Interacts with RNF182; this interaction leads to ubiquitination and degradation via the proteasome pathway. Post-translationally, ubiquitinated by RNF182, leading to its degradation via the ubiquitin-proteasome pathway. Expressed in brain (at protein level).

The protein resides in the cytoplasmic vesicle. It localises to the clathrin-coated vesicle membrane. It is found in the secretory vesicle. The protein localises to the synaptic vesicle membrane. Its function is as follows. Proton-conducting pore forming subunit of the V0 complex of vacuolar(H+)-ATPase (V-ATPase), a multisubunit enzyme composed of a peripheral complex (V1) that hydrolyzes ATP and a membrane integral complex (V0) that translocates protons. V-ATPase is responsible for acidifying and maintaining the pH of intracellular compartments and in some cell types, is targeted to the plasma membrane, where it is responsible for acidifying the extracellular environment. This Bos taurus (Bovine) protein is V-type proton ATPase 16 kDa proteolipid subunit c (ATP6V0C).